Reading from the N-terminus, the 155-residue chain is Transcriptional repressor NrdR (155 aa).

A zinc finger lies at 3–34 (CPFCGNVDTQVKDSRPAEDHVSIRRRRFCPAC). The 91-residue stretch at 49-139 (LVVIKTNGKR…VYKNFQAADD (91 aa)) folds into the ATP-cone domain.

Belongs to the NrdR family. Zn(2+) serves as cofactor.

Its function is as follows. Negatively regulates transcription of bacterial ribonucleotide reductase nrd genes and operons by binding to NrdR-boxes. In Ruegeria sp. (strain TM1040) (Silicibacter sp.), this protein is Transcriptional repressor NrdR.